Here is a 2211-residue protein sequence, read N- to C-terminus: Nonribosomal peptide synthetase 13 (2211 aa).

The segment at Thr76–Pro475 is adenylation 1. In terms of domain architecture, Carrier 1 spans Pro594–Gln671. Ser631 is subject to O-(pantetheine 4'-phosphoryl)serine. A condensation 1 region spans residues Glu710–Val975. An adenylation 2 region spans residues Thr1169–Arg1563. The region spanning Pro1677–Ala1756 is the Carrier 2 domain. The residue at position 1714 (Ser1714) is an O-(pantetheine 4'-phosphoryl)serine. Residues His1814–Ser2069 form a condensation 2 region.

This sequence belongs to the NRP synthetase family.

It carries out the reaction L-proline + L-tryptophan + 2 ATP = brevianamide F + 2 AMP + 2 diphosphate + 2 H(+). Its pathway is mycotoxin biosynthesis. Nonribosomal peptide synthetase; part of the gene cluster that mediates the biosynthesis of fumitremorgins, indole alkaloids that carry not only intriguing chemical structures, but also interesting biological and pharmacological activities. The biosynthesis of fumitremorgin-type alkaloids begins by condensation of the two amino acids L-tryptophan and L-proline to brevianamide F, catalyzed by the non-ribosomal peptide synthetase ftmA. Brevianamide F is then prenylated by the prenyltransferase ftmPT1/ftmB in the presence of dimethylallyl diphosphate, resulting in the formation of tryprostatin B. The three cytochrome P450 monooxygenases, ftmP450-1/ftmC, ftmP450-2/ftmE and ftmP450-3/FtmG, are responsible for the conversion of tryprostatin B to 6-hydroxytryprostatin B, tryprostatin A to fumitremorgin C and fumitremorgin C to 12,13-dihydroxyfumitremorgin C, respectively. The putative methyltransferase ftmMT/ftmD is expected for the conversion of 6-hydroxytryprostatin B to tryprostatin A. FtmPT2/FtmH catalyzes the prenylation of 12,13-dihydroxyfumitre-morgin C in the presence of dimethylallyl diphosphate, resulting in the formation of fumitremorgin B. Fumitremorgin B is further converted to verruculogen by ftmOx1/ftmF via the insertion of an endoperoxide bond between the two prenyl moieties. In some fungal species, verruculogen is further converted to fumitremorgin A, but the enzymes involved in this step have not been identified yet. The sequence is that of Nonribosomal peptide synthetase 13 from Aspergillus fumigatus (Neosartorya fumigata).